A 279-amino-acid chain; its full sequence is Cholesterol 25-hydroxylase-like protein 2 (279 aa).

Residues Asn6 and Asn13 are each glycosylated (N-linked (GlcNAc...) asparagine). The next 3 membrane-spanning stretches occupy residues 36-56, 86-106, and 120-140; these read LFPVILSVSMYLVLVFFYTVL, LALTTYNHLLYIFPAAVAQWL, and LTAFLLGIVGCTVVFDFQYYL. In terms of domain architecture, Fatty acid hydroxylase spans 128–262; sequence VGCTVVFDFQ…FAHWDWLGGT (135 aa). A Histidine box-1 motif is present at residues 141–145; the sequence is WHLLH. The Histidine box-2 signature appears at 156–160; sequence HALHH. 2 consecutive transmembrane segments span residues 165-185 and 189-209; these read TFSLVTQYLSAWELFSVGFWT and PLLLQCHCLTAWAFMLFNIWV. The Histidine box-3 motif lies at 237 to 243; the sequence is RHDAHHQ.

It belongs to the sterol desaturase family. It depends on Fe cation as a cofactor.

The protein resides in the endoplasmic reticulum membrane. In terms of biological role, may catalyze the formation of 25-hydroxycholesterol from cholesterol. The sequence is that of Cholesterol 25-hydroxylase-like protein 2 from Danio rerio (Zebrafish).